A 238-amino-acid polypeptide reads, in one-letter code: CS1 fimbrial subunit B (238 aa).

The signal sequence occupies residues 1 to 17; that stretch reads MRKLFLSLLMIPFVAKA.

The protein localises to the fimbrium. Might function as a shuttle protein in the transport of fimbria through the periplasmic space or might function as an adhesin. The sequence is that of CS1 fimbrial subunit B (csoB) from Escherichia coli.